We begin with the raw amino-acid sequence, 247 residues long: Pyridoxine 5'-phosphate synthase (247 aa).

Asn-7 serves as a coordination point for 3-amino-2-oxopropyl phosphate. 9 to 10 (DH) contributes to the 1-deoxy-D-xylulose 5-phosphate binding site. Arg-18 provides a ligand contact to 3-amino-2-oxopropyl phosphate. Catalysis depends on His-43, which acts as the Proton acceptor. Arg-45 and His-50 together coordinate 1-deoxy-D-xylulose 5-phosphate. Residue Glu-70 is the Proton acceptor of the active site. Thr-100 serves as a coordination point for 1-deoxy-D-xylulose 5-phosphate. His-190 acts as the Proton donor in catalysis. Residues Gly-191 and 212–213 (GH) contribute to the 3-amino-2-oxopropyl phosphate site.

Belongs to the PNP synthase family. As to quaternary structure, homooctamer; tetramer of dimers.

It is found in the cytoplasm. It catalyses the reaction 3-amino-2-oxopropyl phosphate + 1-deoxy-D-xylulose 5-phosphate = pyridoxine 5'-phosphate + phosphate + 2 H2O + H(+). The protein operates within cofactor biosynthesis; pyridoxine 5'-phosphate biosynthesis; pyridoxine 5'-phosphate from D-erythrose 4-phosphate: step 5/5. In terms of biological role, catalyzes the complicated ring closure reaction between the two acyclic compounds 1-deoxy-D-xylulose-5-phosphate (DXP) and 3-amino-2-oxopropyl phosphate (1-amino-acetone-3-phosphate or AAP) to form pyridoxine 5'-phosphate (PNP) and inorganic phosphate. This chain is Pyridoxine 5'-phosphate synthase, found in Synechococcus sp. (strain WH7803).